Here is a 37-residue protein sequence, read N- to C-terminus: Large ribosomal subunit protein bL36 (37 aa).

The protein belongs to the bacterial ribosomal protein bL36 family.

The sequence is that of Large ribosomal subunit protein bL36 from Aliivibrio fischeri (strain ATCC 700601 / ES114) (Vibrio fischeri).